The chain runs to 85 residues: Putative defensin-like protein 142 (85 aa).

The signal sequence occupies residues 1-24 (MKKSFLFTFTVLTIFTILVIGVAP). 4 disulfide bridges follow: C30–C78, C41–C63, C46–C73, and C50–C75.

This sequence belongs to the DEFL family.

The protein localises to the secreted. In Arabidopsis thaliana (Mouse-ear cress), this protein is Putative defensin-like protein 142 (LCR34).